A 300-amino-acid polypeptide reads, in one-letter code: Ubiquitin carboxyl-terminal hydrolase 2 (300 aa).

The region spanning 2–220 (SWTTIESDAG…IRFNLMVICK (219 aa)) is the UCH catalytic domain. The Nucleophile role is filled by cysteine 83. Histidine 159 acts as the Proton donor in catalysis. The region spanning 261 to 290 (NFVGLFVELSKLLVKDRIDKNTWNSTLETA) is the ULD domain.

This sequence belongs to the peptidase C12 family. In terms of assembly, component of the 26S proteasome. Interacts with rpn10.

It localises to the nucleus. It carries out the reaction Thiol-dependent hydrolysis of ester, thioester, amide, peptide and isopeptide bonds formed by the C-terminal Gly of ubiquitin (a 76-residue protein attached to proteins as an intracellular targeting signal).. Functionally, ubiquitin-protein hydrolase is involved both in the processing of ubiquitin precursors and of ubiquitinated proteins. This enzyme is a thiol protease that recognizes and hydrolyzes a peptide bond at the C-terminal glycine of ubiquitin. This chain is Ubiquitin carboxyl-terminal hydrolase 2 (uch2), found in Schizosaccharomyces pombe (strain 972 / ATCC 24843) (Fission yeast).